We begin with the raw amino-acid sequence, 745 residues long: 5-methyltetrahydropteroyltriglutamate--homocysteine methyltransferase (745 aa).

Residues 19-22 and Lys119 contribute to the 5-methyltetrahydropteroyltri-L-glutamate site; that span reads RELK. L-homocysteine contacts are provided by residues 418–420 and Glu471; that span reads IGS. Residues 418-420 and Glu471 contribute to the L-methionine site; that span reads IGS. Residues 502-503 and Trp548 contribute to the 5-methyltetrahydropteroyltri-L-glutamate site; that span reads RC. Residue Asp586 participates in L-homocysteine binding. Asp586 is an L-methionine binding site. Glu592 is a 5-methyltetrahydropteroyltri-L-glutamate binding site. Positions 628, 630, and 652 each coordinate Zn(2+). Catalysis depends on His681, which acts as the Proton donor. Residue Cys713 coordinates Zn(2+).

It belongs to the vitamin-B12 independent methionine synthase family. Zn(2+) is required as a cofactor.

It catalyses the reaction 5-methyltetrahydropteroyltri-L-glutamate + L-homocysteine = tetrahydropteroyltri-L-glutamate + L-methionine. It participates in amino-acid biosynthesis; L-methionine biosynthesis via de novo pathway; L-methionine from L-homocysteine (MetE route): step 1/1. Catalyzes the transfer of a methyl group from 5-methyltetrahydrofolate to homocysteine resulting in methionine formation. The protein is 5-methyltetrahydropteroyltriglutamate--homocysteine methyltransferase of Corynebacterium glutamicum (strain ATCC 13032 / DSM 20300 / JCM 1318 / BCRC 11384 / CCUG 27702 / LMG 3730 / NBRC 12168 / NCIMB 10025 / NRRL B-2784 / 534).